The following is a 212-amino-acid chain: Mediator of RNA polymerase II transcription subunit 20 (212 aa).

It belongs to the Mediator complex subunit 20 family. In terms of assembly, interacts with PPARG. Component of the Mediator complex, which is composed of MED1, MED4, MED6, MED7, MED8, MED9, MED10, MED11, MED12, MED13, MED13L, MED14, MED15, MED16, MED17, MED18, MED19, MED20, MED21, MED22, MED23, MED24, MED25, MED26, MED27, MED29, MED30, MED31, CCNC, CDK8 and CDC2L6/CDK11. The MED12, MED13, CCNC and CDK8 subunits form a distinct module termed the CDK8 module. Mediator containing the CDK8 module is less active than Mediator lacking this module in supporting transcriptional activation. Individual preparations of the Mediator complex lacking one or more distinct subunits have been variously termed ARC, CRSP, DRIP, PC2, SMCC and TRAP.

The protein localises to the nucleus. Its function is as follows. Component of the Mediator complex, a coactivator involved in the regulated transcription of nearly all RNA polymerase II-dependent genes. Mediator functions as a bridge to convey information from gene-specific regulatory proteins to the basal RNA polymerase II transcription machinery. Mediator is recruited to promoters by direct interactions with regulatory proteins and serves as a scaffold for the assembly of a functional preinitiation complex with RNA polymerase II and the general transcription factors. This chain is Mediator of RNA polymerase II transcription subunit 20 (MED20), found in Homo sapiens (Human).